We begin with the raw amino-acid sequence, 236 residues long: uncharacterized protein (236 aa).

This is an uncharacterized protein from Sus scrofa (Pig).